The following is a 74-amino-acid chain: UPF0270 protein NT01EI_3666 (74 aa).

Belongs to the UPF0270 family.

This chain is UPF0270 protein NT01EI_3666, found in Edwardsiella ictaluri (strain 93-146).